A 983-amino-acid polypeptide reads, in one-letter code: MMKGYITLSFLIILIFNFLDEFAASTRHLCDPDQSDAILEFKNEFETLEESCFDSNIPLKTESWTNNSDCCYWDGIKCDAKFGDVIELDLSFSCLRGQLNSNSSLFRLPQLRFLTTLDLSNNDFIGQIPSSLETLSNLTTLDLSRNHFSGRIPSSIGNLSHLIFVDFSHNNFSGQIPSSLGYLSHLTSFNLSYNNFSGRVPSSIGNLSYLTTLRLSRNSFFGELPSSLGSLFHLTDLILDTNHFVGKIPSSLGNLSHLTSIDLHKNNFVGEIPFSLGNLSCLTSFILSDNNIVGEIPSSFGNLNQLDILNVKSNKLSGSFPIALLNLRKLSTLSLFNNRLTGTLPSNMSSLSNLKLFDATENHFTGPLPSSLFNIPSLKTITLENNQLNGSLGFGNISSYSNLTVLRLGNNNFRGPIHRSISKLVNLKELDLSNYNTQGLVDFTIFSHLKSIEYLNLSHLNTTTTIDMYEILSSFKLLDTLDLSGSHVSTTNKSSLSNSSLVLISQLYLSGCGITEFPKFLRSQELMLTLDISNNKIKGQVPGWLWMLPVLNYVNLSNNTFIGFERSTKLGLTSIQEPPAMRQLFCSNNNFTGNIPSFICELPYLSTLDFSNNKFNGSIPTCMGNIQSPYLQALNLRHNRLSGLLPENIFESLISLDVGHNQLVGKLPRSLSHISSLGLLNVESNKISDTFPLWLSSLQELQVLVLRSNAFYGPIEKTQFSKLRIIDISGNQFNGTLPANFFVNWTAMFSLDENEDQSNGETMSNMYMSTDYFYFDSMVLMNKGVEMELERVLKVFTVIDFSGNKFEGEIPKSIGLLKELHVLNLSNNALSGHIASSMGNLMALESLDVSQNKLSGEIPQELGKLTYLAYMNFSHNQLVGLLPGGTQFQTQKCSSFEDNHGLYGPSLEKICDIHGKTPQQSDMAPEPEEDEEEVISWIAAVIGFILGTALGLTFGCILFSYKPDWFKNPFVRDKRRNIGTITH.

The signal sequence occupies residues 1–25; it reads MMKGYITLSFLIILIFNFLDEFAAS. Residues 26-937 lie on the Extracellular side of the membrane; it reads TRHLCDPDQS…EEDEEEVISW (912 aa). N-linked (GlcNAc...) asparagine glycosylation is found at asparagine 66 and asparagine 102. LRR repeat units follow at residues 82 to 108, 111 to 135, 136 to 159, 161 to 183, 184 to 207, 209 to 231, 232 to 255, 256 to 281, 283 to 302, 303 to 327, 328 to 351, 353 to 375, 376 to 399, 401 to 424, 425 to 448, 450 to 474, 475 to 498, 501 to 524, 525 to 548, 550 to 571, 578 to 602, 603 to 628, 629 to 652, 654 to 674, 675 to 700, 702 to 720, 721 to 744, 793 to 817, 818 to 840, 841 to 865, and 867 to 890; these read FGDV…LFRL, LRFL…LETL, SNLT…IGNL, HLIF…LGYL, SHLT…IGNL, YLTT…LGSL, FHLT…LGNL, SHLT…NLSC, TSFI…SFGN, LNQL…LLNL, RKLS…MSSL, NLKL…LFNI, PSLK…NISS, SNLT…ISKL, VNLK…IFSH, KSIE…ILSS, FKLL…SLSN, LVLI…LRSQ, ELML…LWML, VLNY…TKLG, PPAM…ICEL, PYLS…NIQS, PYLQ…IFES, ISLD…LSHI, SSLG…SLQE, QVLV…KTQF, SKLR…FFVN, LKVF…IGLL, KELH…SMGN, LMAL…LGKL, and YLAY…QFQT. Asparagine 137, asparagine 158, asparagine 171, asparagine 190, asparagine 195, and asparagine 206 each carry an N-linked (GlcNAc...) asparagine glycan. Residues asparagine 254 and asparagine 278 are each glycosylated (N-linked (GlcNAc...) asparagine). Residue asparagine 347 is glycosylated (N-linked (GlcNAc...) asparagine). Residues asparagine 389, asparagine 396, and asparagine 402 are each glycosylated (N-linked (GlcNAc...) asparagine). N-linked (GlcNAc...) asparagine glycans are attached at residues asparagine 456, asparagine 461, asparagine 492, and asparagine 498. N-linked (GlcNAc...) asparagine glycans are attached at residues asparagine 555, asparagine 558, asparagine 590, and asparagine 616. N-linked (GlcNAc...) asparagine glycosylation is found at asparagine 734 and asparagine 744. A glycan (N-linked (GlcNAc...) asparagine) is linked at asparagine 824. N-linked (GlcNAc...) asparagine glycosylation occurs at asparagine 872. A helical transmembrane segment spans residues 938-958; sequence IAAVIGFILGTALGLTFGCIL. Residues 959–983 are Cytoplasmic-facing; that stretch reads FSYKPDWFKNPFVRDKRRNIGTITH.

This sequence belongs to the RLP family.

Its subcellular location is the cell membrane. The sequence is that of Receptor-like protein 19 from Arabidopsis thaliana (Mouse-ear cress).